Reading from the N-terminus, the 218-residue chain is dTTP/UTP pyrophosphatase (218 aa).

Asp76 serves as the catalytic Proton acceptor.

Belongs to the Maf family. YhdE subfamily. The cofactor is a divalent metal cation.

Its subcellular location is the cytoplasm. The enzyme catalyses dTTP + H2O = dTMP + diphosphate + H(+). It catalyses the reaction UTP + H2O = UMP + diphosphate + H(+). In terms of biological role, nucleoside triphosphate pyrophosphatase that hydrolyzes dTTP and UTP. May have a dual role in cell division arrest and in preventing the incorporation of modified nucleotides into cellular nucleic acids. The sequence is that of dTTP/UTP pyrophosphatase from Cytophaga hutchinsonii (strain ATCC 33406 / DSM 1761 / CIP 103989 / NBRC 15051 / NCIMB 9469 / D465).